The sequence spans 209 residues: Thymidine kinase (209 aa).

ATP is bound by residues 9–16 (SAMNAGKT) and 88–91 (DEAQ). Glu-89 functions as the Proton acceptor in the catalytic mechanism.

It belongs to the thymidine kinase family. In terms of assembly, homotetramer.

It localises to the cytoplasm. The enzyme catalyses thymidine + ATP = dTMP + ADP + H(+). The chain is Thymidine kinase from Xanthomonas axonopodis pv. citri (strain 306).